Here is a 775-residue protein sequence, read N- to C-terminus: Chondroitin sulfate synthase 2 (775 aa).

Over 1 to 15 (MRASLLLSVLRPAGP) the chain is Cytoplasmic. Residues 16 to 34 (VAVGISLGFTLSLLSVTWV) form a helical; Signal-anchor for type II membrane protein membrane-spanning segment. Residues 35-775 (EEPCGPGPPQ…LFEQEQGNST (741 aa)) lie on the Lumenal side of the membrane. The segment at 37 to 100 (PCGPGPPQPG…YHPAQPGQAA (64 aa)) is disordered. Over residues 54 to 66 (GNTNAARRPNSVQ) the composition is skewed to polar residues. N-linked (GlcNAc...) asparagine glycosylation is found at Asn138 and Asn361. Asp617 serves as a coordination point for a divalent metal cation.

This sequence belongs to the chondroitin N-acetylgalactosaminyltransferase family. Interacts with PRKN. Mn(2+) is required as a cofactor. Co(2+) serves as cofactor. Ubiquitous. Highly expressed in pancreas, ovary, brain, heart, skeletal muscle, colon, kidney, liver, stomach, spleen and placenta. As to expression, expressed in brain, spleen, ovary, testis, lung and peripheral mononuclear cells. In terms of tissue distribution, also ubiquitous.

The protein resides in the golgi apparatus. It localises to the golgi stack membrane. Its subcellular location is the cytoplasm. It is found in the cytosol. The protein localises to the mitochondrion. The protein resides in the mitochondrion matrix. It carries out the reaction 3-O-(beta-D-GlcA-(1-&gt;3)-beta-D-GalNAc-(1-&gt;4)-beta-D-GlcA-(1-&gt;3)-beta-D-Gal-(1-&gt;3)-beta-D-Gal-(1-&gt;4)-beta-D-Xyl)-L-seryl-[protein] + UDP-N-acetyl-alpha-D-galactosamine = 3-O-(beta-D-GalNAc-(1-&gt;4)-beta-D-GlcA-(1-&gt;3)-beta-D-GalNAc-(1-&gt;4)-beta-D-GlcA-(1-&gt;3)-beta-D-Gal-(1-&gt;3)-beta-D-Gal-(1-&gt;4)-beta-D-Xyl)-L-seryl-[protein] + UDP + H(+). The catalysed reaction is 3-O-{beta-D-GlcA-(1-&gt;3)-[beta-D-GalNAc-(1-&gt;4)-beta-D-GlcA-(1-&gt;3)](n)-beta-D-GalNAc-(1-&gt;4)-beta-D-GlcA-(1-&gt;3)-beta-D-Gal-(1-&gt;3)-beta-D-Gal-(1-&gt;4)-beta-D-Xyl}-L-seryl-[protein] + UDP-N-acetyl-alpha-D-galactosamine = 3-O-{[beta-D-GalNAc-(1-&gt;4)-beta-D-GlcA-(1-&gt;3)](n+1)-beta-D-GalNAc-(1-&gt;4)-beta-D-GlcA-(1-&gt;3)-beta-D-Gal-(1-&gt;3)-beta-D-Gal-(1-&gt;4)-beta-D-Xyl}-L-seryl-[protein] + UDP + H(+). It catalyses the reaction 3-O-(beta-D-GalNAc-(1-&gt;4)-beta-D-GlcA-(1-&gt;3)-beta-D-Gal-(1-&gt;3)-beta-D-Gal-(1-&gt;4)-beta-D-Xyl)-L-seryl-[protein] + UDP-alpha-D-glucuronate = 3-O-(beta-D-GlcA-(1-&gt;3)-beta-D-GalNAc-(1-&gt;4)-beta-D-GlcA-(1-&gt;3)-beta-D-Gal-(1-&gt;3)-beta-D-Gal-(1-&gt;4)-beta-D-Xyl)-L-seryl-[protein] + UDP + H(+). The enzyme catalyses 3-O-{[beta-D-GalNAc-(1-&gt;4)-beta-D-GlcA-(1-&gt;3)](n)-beta-D-GalNAc-(1-&gt;4)-beta-D-GlcA-(1-&gt;3)-beta-D-Gal-(1-&gt;3)-beta-D-Gal-(1-&gt;4)-beta-D-Xyl}-L-seryl-[protein] + UDP-alpha-D-glucuronate = 3-O-{beta-D-GlcA-(1-&gt;3)-[beta-D-GalNAc-(1-&gt;4)-beta-D-GlcA-(1-&gt;3)](n)-beta-D-GalNAc-(1-&gt;4)-beta-D-GlcA-(1-&gt;3)-beta-D-Gal-(1-&gt;3)-beta-D-Gal-(1-&gt;4)-beta-D-Xyl}-L-seryl-[protein] + UDP + H(+). Has both beta-1,3-glucuronic acid and beta-1,4-N-acetylgalactosamine transferase activity. Transfers glucuronic acid (GlcUA) from UDP-GlcUA and N-acetylgalactosamine (GalNAc) from UDP-GalNAc to the non-reducing end of the elongating chondroitin polymer. Seems to act as a specific activating factor for CHSY1 in chondroitin polymerization. Its function is as follows. May facilitate PRKN transport into the mitochondria. In collaboration with PRKN, may enhance cell viability and protect cells from oxidative stress. The protein is Chondroitin sulfate synthase 2 of Homo sapiens (Human).